The primary structure comprises 81 residues: Antimicrobial peptide D1 (81 aa).

Residues 1 to 31 (MAKTVLGIHVTFLTLLFAVLLLNDVMYTPVE) form the signal peptide. 4 disulfides stabilise this stretch: Cys34/Cys81, Cys45/Cys66, Cys51/Cys75, and Cys55/Cys77.

In terms of biological role, antimicrobial peptide probably active against fungi like B.sorokiniana, F.oxysporum, F.graminearum, F.avenaceum, B.cinerea, P.beta, P.infestans and P.debaryanum. This Stellaria media (Common chickweed) protein is Antimicrobial peptide D1.